Consider the following 358-residue polypeptide: UDP-N-acetylglucosamine--N-acetylmuramyl-(pentapeptide) pyrophosphoryl-undecaprenol N-acetylglucosamine transferase (358 aa).

UDP-N-acetyl-alpha-D-glucosamine is bound by residues 10-12, N124, R165, S187, I243, and Q288; that span reads TGG.

This sequence belongs to the glycosyltransferase 28 family. MurG subfamily.

It is found in the cell inner membrane. The catalysed reaction is di-trans,octa-cis-undecaprenyl diphospho-N-acetyl-alpha-D-muramoyl-L-alanyl-D-glutamyl-meso-2,6-diaminopimeloyl-D-alanyl-D-alanine + UDP-N-acetyl-alpha-D-glucosamine = di-trans,octa-cis-undecaprenyl diphospho-[N-acetyl-alpha-D-glucosaminyl-(1-&gt;4)]-N-acetyl-alpha-D-muramoyl-L-alanyl-D-glutamyl-meso-2,6-diaminopimeloyl-D-alanyl-D-alanine + UDP + H(+). The protein operates within cell wall biogenesis; peptidoglycan biosynthesis. Its function is as follows. Cell wall formation. Catalyzes the transfer of a GlcNAc subunit on undecaprenyl-pyrophosphoryl-MurNAc-pentapeptide (lipid intermediate I) to form undecaprenyl-pyrophosphoryl-MurNAc-(pentapeptide)GlcNAc (lipid intermediate II). The polypeptide is UDP-N-acetylglucosamine--N-acetylmuramyl-(pentapeptide) pyrophosphoryl-undecaprenol N-acetylglucosamine transferase (Syntrophotalea carbinolica (strain DSM 2380 / NBRC 103641 / GraBd1) (Pelobacter carbinolicus)).